Consider the following 440-residue polypeptide: Golgi reassembly-stacking protein 1 (440 aa).

A lipid anchor (N-myristoyl glycine) is attached at Gly-2. 2 consecutive PDZ GRASP-type domains span residues 15-105 (EGFH…FCSF) and 111-199 (QVWH…YGYL). Residues 15 to 215 (EGFHLHGVQE…PPSYHKKPPG (201 aa)) are GRASP. His-18, His-20, and Cys-103 together coordinate Zn(2+). The tract at residues 190 to 202 (LGCGIGYGYLHRI) is essential for interaction with GOLGA2/GM130. 3 disordered regions span residues 205–248 (QPPS…ETGS), 261–301 (PGSS…PVQR), and 327–440 (LPSS…STTE). Over residues 214-239 (PGTPPPSALPLGAPPPDALPPGPTPE) the composition is skewed to pro residues. Residue Thr-216 is modified to Phosphothreonine. Positions 327–336 (LPSSTELTTT) are enriched in low complexity. Residues 337 to 351 (AVSTSGPEDICSSSS) show a composition bias toward polar residues. 3 positions are modified to phosphoserine: Ser-362, Ser-364, and Ser-373.

It belongs to the GORASP family. As to quaternary structure, homodimer. Forms higher-order oligomers under interphase but not mitotic conditions. Dimers of the protein on one membrane might be able to interact with dimers on another and so stack cisternae. Interacts with the C-terminus of GOLGA2/GM130 under both mitotic and non-mitotic conditions. The interaction is critical for the correct targeting of both proteins to the cis-Golgi. Interacts with TMED2 and TMED3. Phosphorylated by CDC2/B1 and PLK kinases during mitosis. Phosphorylation cycle correlates with the cisternal stacking cycle. Phosphorylation of the homodimer prevents the association of dimers into higher-order oligomers, leading to cisternal unstacking. Post-translationally, target for caspase-3 cleavage during apoptosis. The cleavage contributes to Golgi fragmentation and occurs very early in the execution phase of apoptosis. In terms of processing, myristoylated.

It is found in the golgi apparatus. Its subcellular location is the cis-Golgi network membrane. It localises to the endoplasmic reticulum-Golgi intermediate compartment membrane. Functionally, key structural protein of the Golgi apparatus. The membrane cisternae of the Golgi apparatus adhere to each other to form stacks, which are aligned side by side to form the Golgi ribbon. Acting in concert with GORASP2/GRASP55, is required for the formation and maintenance of the Golgi ribbon, and may be dispensable for the formation of stacks. However, other studies suggest that GORASP1 plays an important role in assembly and membrane stacking of the cisternae, and in the reassembly of Golgi stacks after breakdown during mitosis. Caspase-mediated cleavage of GORASP1 is required for fragmentation of the Golgi during apoptosis. Also mediates, via its interaction with GOLGA2/GM130, the docking of transport vesicles with the Golgi membranes. Mediates ER stress-induced unconventional (ER/Golgi-independent) trafficking of core-glycosylated CFTR to cell membrane. The sequence is that of Golgi reassembly-stacking protein 1 (GORASP1) from Homo sapiens (Human).